A 648-amino-acid chain; its full sequence is Mitochondrial Rho GTPase 1 (648 aa).

Topologically, residues 1-619 are cytoplasmic; sequence MARYAAGAVD…KHYNRLINRS (619 aa). Ser14 is modified (phosphoserine). Positions 15 to 182 constitute a Miro 1 domain; the sequence is PKSVRIVVVG…FYYAQKTVLH (168 aa). EF-hand domains are found at residues 198 to 233 and 319 to 354; these read RCVR…CFHA and AAID…APES. Positions 211, 213, 215, 222, 332, 334, 336, 338, and 343 each coordinate Ca(2+). The 169-residue stretch at 427–595 folds into the Miro 2 domain; it reads RKVFQCFVFG…FRKILTAAQH (169 aa). A helical transmembrane segment spans residues 620 to 640; it reads LMAVSIGAAAVVVGLAAYRVY. Residues 641–648 lie on the Mitochondrial intermembrane side of the membrane; it reads ATRKSSSA.

This sequence belongs to the mitochondrial Rho GTPase family. In terms of tissue distribution, expressed in roots, leaves, stems, flowers and siliques.

It localises to the mitochondrion outer membrane. Functionally, mitochondrial GTPase required to maintain proper development, morphology and intracellular distribution of mitochondria, which in turn are essential for the progress of embryonic cell division, development of haploid male and female gametes, and pollen tube growth. The sequence is that of Mitochondrial Rho GTPase 1 from Arabidopsis thaliana (Mouse-ear cress).